A 581-amino-acid polypeptide reads, in one-letter code: Tricyclene synthase Oc15, chloroplastic (581 aa).

The transit peptide at 1 to 68 directs the protein to the chloroplast; it reads MAFCISYVGA…ALCLNEHSLS (68 aa). N27, N206, and N319 each carry an N-linked (GlcNAc...) asparagine glycan. Mg(2+) contacts are provided by D338 and D342. Residues 338–342 carry the DDXXD motif motif; the sequence is DDIFD. N-linked (GlcNAc...) asparagine glycosylation is found at N384 and N465. 3 residues coordinate Mg(2+): N482, S486, and E490. N509 is a glycosylation site (N-linked (GlcNAc...) asparagine).

It belongs to the terpene synthase family. Tpsg subfamily. Requires Mg(2+) as cofactor. The cofactor is Mn(2+). Accumulates in flowers; mostly expressed in both upper and lower petal lobes, and, to a lower extent, in tube and stamens.

The protein localises to the plastid. It is found in the chloroplast stroma. It catalyses the reaction (2E)-geranyl diphosphate = tricyclene + diphosphate. The catalysed reaction is (2E)-geranyl diphosphate = beta-myrcene + diphosphate. The protein operates within secondary metabolite biosynthesis; terpenoid biosynthesis. Functionally, contributes to floral scent emission. The sequence is that of Tricyclene synthase Oc15, chloroplastic (Oc15) from Antirrhinum majus (Garden snapdragon).